Consider the following 197-residue polypeptide: 3-isopropylmalate dehydratase small subunit (197 aa).

This sequence belongs to the LeuD family. LeuD type 1 subfamily. As to quaternary structure, heterodimer of LeuC and LeuD.

It carries out the reaction (2R,3S)-3-isopropylmalate = (2S)-2-isopropylmalate. Its pathway is amino-acid biosynthesis; L-leucine biosynthesis; L-leucine from 3-methyl-2-oxobutanoate: step 2/4. In terms of biological role, catalyzes the isomerization between 2-isopropylmalate and 3-isopropylmalate, via the formation of 2-isopropylmaleate. The protein is 3-isopropylmalate dehydratase small subunit of Streptomyces avermitilis (strain ATCC 31267 / DSM 46492 / JCM 5070 / NBRC 14893 / NCIMB 12804 / NRRL 8165 / MA-4680).